The primary structure comprises 249 residues: Triosephosphate isomerase (249 aa).

Substrate is bound at residue 9-11; sequence NWK. His-91 (electrophile) is an active-site residue. Glu-163 serves as the catalytic Proton acceptor. Substrate-binding positions include Gly-169, Ser-209, and 230-231; that span reads GG.

Belongs to the triosephosphate isomerase family. Homodimer.

The protein localises to the cytoplasm. The catalysed reaction is D-glyceraldehyde 3-phosphate = dihydroxyacetone phosphate. It participates in carbohydrate biosynthesis; gluconeogenesis. The protein operates within carbohydrate degradation; glycolysis; D-glyceraldehyde 3-phosphate from glycerone phosphate: step 1/1. Its function is as follows. Involved in the gluconeogenesis. Catalyzes stereospecifically the conversion of dihydroxyacetone phosphate (DHAP) to D-glyceraldehyde-3-phosphate (G3P). This is Triosephosphate isomerase from Halorhodospira halophila (strain DSM 244 / SL1) (Ectothiorhodospira halophila (strain DSM 244 / SL1)).